A 304-amino-acid polypeptide reads, in one-letter code: Glycine--tRNA ligase alpha subunit (304 aa).

Belongs to the class-II aminoacyl-tRNA synthetase family. As to quaternary structure, tetramer of two alpha and two beta subunits.

The protein localises to the cytoplasm. The enzyme catalyses tRNA(Gly) + glycine + ATP = glycyl-tRNA(Gly) + AMP + diphosphate. This chain is Glycine--tRNA ligase alpha subunit, found in Serratia proteamaculans (strain 568).